A 332-amino-acid chain; its full sequence is Serpentine receptor class alpha-10 (332 aa).

The Extracellular portion of the chain corresponds to 1-26 (MTSSNISICATEDQMVLQTSLLLRVN). Residues 27 to 47 (VILMTTVAIFTFVLTYRALFI) traverse the membrane as a helical segment. Residues 48–64 (LKQRPIFHKSTKILLYT) are Cytoplasmic-facing. Residues 65–85 (SLIFVNIHEIIFMVIQCVAFI) form a helical membrane-spanning segment. The Extracellular segment spans residues 86-109 (RSFTLSDKPCEIMRTTLECRFKNH). A helical membrane pass occupies residues 110-132 (VLIFGIAGMNFNQFGLTVDRLLA). Residues 133–146 (TVIPQTYSHLGSFP) are Cytoplasmic-facing. A helical membrane pass occupies residues 147-167 (GILISILVIGCSIAAPLIIAI). The Extracellular portion of the chain corresponds to 168–191 (GDPYDDIVPNCFFFPQHSAPRANV). The chain crosses the membrane as a helical span at residues 192-212 (FLIILSALVIASIFLNLIIIF). Residues 213–239 (ANKKLEKGTRYYVSQRYQKREALISTR) are Cytoplasmic-facing. A helical transmembrane segment spans residues 240-260 (IIVYIAASQFLGMVLYSTIVL). The Extracellular segment spans residues 261-276 (TLRLHKSMIPVSMYHN). The helical transmembrane segment at 277–297 (IVWWAYTVPFAAVALPALLIH) threads the bilayer. At 298 to 332 (RINLVGSNRKRVINRITAKVETQEEHMKSLKELWG) the chain is on the cytoplasmic side.

It belongs to the nematode receptor-like protein sra family.

The protein resides in the membrane. This chain is Serpentine receptor class alpha-10, found in Caenorhabditis briggsae.